A 1723-amino-acid polypeptide reads, in one-letter code: Homeobox protein 5 (1723 aa).

Low complexity predominate over residues 36–50 (QLQQPQHQPQHYQQQ). Disordered regions lie at residues 36 to 425 (QLQQ…APGT), 440 to 522 (SSSP…QLQQ), 543 to 756 (ENIT…PPLT), 878 to 978 (GTIV…TGSL), 1080 to 1214 (IFNN…SENN), 1226 to 1264 (VSLGSLPTNTPSSMEIEQQQQQQQQQQQQQQQQHLNQQQ), 1345 to 1399 (IVNN…TQTS), 1456 to 1498 (QQQQ…STTT), and 1513 to 1547 (HNQQVSPISPRSPRSPHGTSGDYNDGSQSPSSRRK). Positions 51 to 72 (DSFVSPNLDNNNPQIHVQSNNY) are enriched in polar residues. Composition is skewed to low complexity over residues 73 to 107 (NQNGFVGYNNSNNNNNNNQHMNNQYSNSFHNNNSS) and 114 to 212 (NNSS…NNNN). Composition is skewed to polar residues over residues 223 to 237 (SQPTSPYNNPIQHNP) and 244 to 257 (GQHNPFNGNQMVMD). 2 stretches are compositionally biased toward low complexity: residues 258 to 284 (NNNNNNNNNNSNVFNSNSNSNVFNSNS) and 291 to 350 (NNNN…NNNN). Residues 300 to 351 (YNNNNNNNNNNNSNSNNNNNNNNNNNNNNNNNNNNNNNNNNNNNSNNNNNNQ) adopt a coiled-coil conformation. Residues 351–369 (QFSQSYDSTLGNNRFSSMM) show a composition bias toward polar residues. Low complexity-rich tracts occupy residues 371–421 (QPIQ…LIGS) and 440–465 (SSSPTSSPSSPVKKGKSQSALALSSS). The segment covering 483–510 (MSSITNTNLKSTQASTLKESKRSNSSPN) has biased composition (polar residues). Low complexity-rich tracts occupy residues 511 to 522 (LKKQMQLQQLQQ), 544 to 571 (NITNNNNNNNNNNNNNNNNNNNNNITNN), and 581 to 593 (NSNNINQSSDSIN). Polar residues predominate over residues 632 to 655 (HISTTQQSPSLNGSTGGSMLTPTM). Residues 660-669 (LSGGGSGGGF) show a composition bias toward gly residues. Over residues 673 to 685 (ISPTGTTSNKDLQ) the composition is skewed to polar residues. 3 stretches are compositionally biased toward low complexity: residues 686-699 (SSPSPSPLLKSMSM), 710-727 (SMSSPLSPNSSLSSSNGL), and 734-745 (SNNMNSSGGIPT). Residues 746–755 (PSTPTSPPPL) show a composition bias toward pro residues. Residues 882-928 (NPTNVNNNNINNNNNNNNNNNNNNNNNNNNNNNNNNNNTTTTTTTTT) show a composition bias toward low complexity. The segment covering 929 to 945 (SANTVQSGTTSNSNLVF) has biased composition (polar residues). Low complexity-rich tracts occupy residues 946 to 977 (QQTSNSNTLSPSQQQQQQTQQQQSINGSSTGS) and 1082 to 1146 (NNNN…SINS). Polar residues-rich tracts occupy residues 1147–1159 (PRPSTPTTLNSSG) and 1176–1187 (DISTGLMASSDQ). Residues 1193–1270 (QQQQHQQLVN…NQQQILHQQL (78 aa)) adopt a coiled-coil conformation. Over residues 1194–1214 (QQQHQQLVNNNNNNMNNSENN) the composition is skewed to low complexity. Polar residues predominate over residues 1226–1242 (VSLGSLPTNTPSSMEIE). Composition is skewed to low complexity over residues 1243 to 1264 (QQQQQQQQQQQQQQQQHLNQQQ), 1347 to 1384 (NNQNNNNNDQNNNNNNNNNNNSTTNSNVNNNNNTTNTP), 1456 to 1480 (QQQQQQQETPHTPTSNSISSPRSSP), 1487 to 1498 (SNTNTTTTSTTT), and 1518 to 1528 (SPISPRSPRSP). Positions 1431–1464 (VLQQQQQQQQQQQQQQQQQQQQQQQQQQQQQQET) form a coiled coil. Over residues 1529-1543 (HGTSGDYNDGSQSPS) the composition is skewed to polar residues. Residues 1543-1607 (SSRRKNRFTD…NKRARSRPSP (65 aa)) constitute a DNA-binding region (homeobox). The region spanning 1553–1588 (FQIKRMNDCFENLDKNNNGKFTSEEICQIATELGLT) is the EF-hand domain. Disordered regions lie at residues 1598-1625 (NKRARSRPSPRGQPTNPLTSSTNNGNNS) and 1661-1723 (LHQQ…TINE). Low complexity predominate over residues 1612 to 1625 (TNPLTSSTNNGNNS). Positions 1632-1702 (LQQQHLQQVQ…NNNNNNNNNN (71 aa)) form a coiled coil. Residues 1665-1675 (SANTTPQLNSM) are compositionally biased toward polar residues. The segment covering 1676 to 1723 (NPNSINYNNNNNNNNNNNNNNNNNNNNNNNNNNNNNNIINNNITTINE) has biased composition (low complexity).

It localises to the nucleus. Its function is as follows. Putative transcription factor. This Dictyostelium discoideum (Social amoeba) protein is Homeobox protein 5 (hbx5-1).